The following is a 423-amino-acid chain: Putative competence-damage inducible protein (423 aa).

The protein belongs to the CinA family.

This is Putative competence-damage inducible protein from Streptococcus pyogenes serotype M1.